The sequence spans 448 residues: Cysteine--tRNA ligase (448 aa).

C29 contacts Zn(2+). Residues 31–41 (PTVYNYIHIGN) carry the 'HIGH' region motif. Zn(2+)-binding residues include C212, H237, and E241. Positions 269–273 (KMSKS) match the 'KMSKS' region motif. Residue K272 coordinates ATP.

It belongs to the class-I aminoacyl-tRNA synthetase family. Monomer. The cofactor is Zn(2+).

It is found in the cytoplasm. The enzyme catalyses tRNA(Cys) + L-cysteine + ATP = L-cysteinyl-tRNA(Cys) + AMP + diphosphate. This is Cysteine--tRNA ligase from Streptococcus equi subsp. zooepidemicus (strain MGCS10565).